The sequence spans 371 residues: Neuropeptide Y receptor type 6 (371 aa).

Topologically, residues 1-31 (MEVSLNDPASNKTSAKSNSSAFFYFESCQSP) are extracellular. N-linked (GlcNAc...) asparagine glycosylation is found at N11 and N18. A helical membrane pass occupies residues 32 to 52 (SLALLLLLIAYTVVLIMGICG). Residues 53 to 72 (NLSLITIIFKKQREAQNVTN) are Cytoplasmic-facing. Residues 73–93 (ILIANLSLSDILVCVMCIPFT) traverse the membrane as a helical segment. The Extracellular segment spans residues 94–111 (AIYTLMDRWIFGNTMCKL). Cysteines 109 and 196 form a disulfide. The chain crosses the membrane as a helical span at residues 112 to 132 (TSYVQSVSISVSIFSLVLIAI). Over 133 to 150 (ERYQLIVNPRGWKPSASH) the chain is Cytoplasmic. A helical membrane pass occupies residues 151 to 171 (AYWGIMLIWLFSLLLSIPLLL). Topologically, residues 172-213 (SYHLTDEPFRNLSLPTDLYSHHVVCVEHWPSKTNQLLYSTSL) are extracellular. N182 is a glycosylation site (N-linked (GlcNAc...) asparagine). Residues 214-234 (IMLQYFVPLGFMFICYLKIVI) traverse the membrane as a helical segment. Residues 235-263 (CLHKRNSKIDRRRENESRLTENKRINTML) lie on the Cytoplasmic side of the membrane. A helical transmembrane segment spans residues 264-284 (ISIVVTFAACWLPLNTFNVIF). Residues 285-297 (DWYHEVLMSCHHD) lie on the Extracellular side of the membrane. The helical transmembrane segment at 298 to 318 (LVFAICHLVAMVSTCINPLFY) threads the bilayer. The Cytoplasmic portion of the chain corresponds to 319 to 371 (GFLNRNFQKDLVVLIHHCLCFALRERYENIAISTLHTDESKGSLRVAHIPAGI). The S-palmitoyl cysteine moiety is linked to residue C336.

The protein belongs to the G-protein coupled receptor 1 family. As to expression, expressed in hippocampus, striatum, hypothalamus, cerebellum, small intestine, colon and adrenal gland.

The protein resides in the cell membrane. Functionally, receptor for neuropeptide Y and peptide YY. The activity of this receptor is mediated by G proteins that inhibit adenylate cyclase activity. The sequence is that of Neuropeptide Y receptor type 6 (NPY6R) from Oryctolagus cuniculus (Rabbit).